Here is a 417-residue protein sequence, read N- to C-terminus: Serine hydroxymethyltransferase (417 aa).

Residues L121 and 125-127 (GHL) each bind (6S)-5,6,7,8-tetrahydrofolate. K229 is subject to N6-(pyridoxal phosphate)lysine. 355–357 (SPF) serves as a coordination point for (6S)-5,6,7,8-tetrahydrofolate.

This sequence belongs to the SHMT family. In terms of assembly, homodimer. It depends on pyridoxal 5'-phosphate as a cofactor.

The protein resides in the cytoplasm. It catalyses the reaction (6R)-5,10-methylene-5,6,7,8-tetrahydrofolate + glycine + H2O = (6S)-5,6,7,8-tetrahydrofolate + L-serine. It functions in the pathway one-carbon metabolism; tetrahydrofolate interconversion. It participates in amino-acid biosynthesis; glycine biosynthesis; glycine from L-serine: step 1/1. In terms of biological role, catalyzes the reversible interconversion of serine and glycine with tetrahydrofolate (THF) serving as the one-carbon carrier. This reaction serves as the major source of one-carbon groups required for the biosynthesis of purines, thymidylate, methionine, and other important biomolecules. Also exhibits THF-independent aldolase activity toward beta-hydroxyamino acids, producing glycine and aldehydes, via a retro-aldol mechanism. The protein is Serine hydroxymethyltransferase of Serratia proteamaculans (strain 568).